The primary structure comprises 120 residues: Flagellar protein FliT (120 aa).

A required for homodimerization region spans residues 1–50; the sequence is MERHQHLLSEYQQILTLSEQMLMLATVENWDALVDLEMAYLKAVENTANI. Residues 60 to 98 form a fliD binding region; that stretch reads LQELLRQKLRSILENEIEIKRLLQRRLDKLSELVGQSTR.

It belongs to the FliT family. As to quaternary structure, homodimer. Interacts with FliD and FlhC.

It is found in the cytoplasm. The protein localises to the cytosol. Its function is as follows. Dual-function protein that regulates the transcription of class 2 flagellar operons and that also acts as an export chaperone for the filament-capping protein FliD. As a transcriptional regulator, acts as an anti-FlhDC factor; it directly binds FlhC, thus inhibiting the binding of the FlhC/FlhD complex to class 2 promoters, resulting in decreased expression of class 2 flagellar operons. As a chaperone, effects FliD transition to the membrane by preventing its premature polymerization, and by directing it to the export apparatus. The protein is Flagellar protein FliT of Yersinia pseudotuberculosis serotype IB (strain PB1/+).